We begin with the raw amino-acid sequence, 344 residues long: L-rhamnose-proton symporter (344 aa).

10 consecutive transmembrane segments (helical) span residues 4–24, 38–58, 68–88, 101–121, 137–157, 175–195, 214–234, 259–279, 290–310, and 323–343; these read AITM…CFYA, WSVG…ALLL, FSLS…IGNI, MGIG…TPII, TLLG…AGQL, LVLA…MNAA, LPSY…FCFI, VLLS…YAWG, ISWM…GLVL, and VLSL…IGMA.

It belongs to the L-rhamnose transporter (TC 2.A.7.6) family.

The protein resides in the cell inner membrane. It carries out the reaction L-rhamnopyranose(in) + H(+)(in) = L-rhamnopyranose(out) + H(+)(out). Uptake of L-rhamnose across the cytoplasmic membrane with the concomitant transport of protons into the cell (symport system). This Shigella flexneri protein is L-rhamnose-proton symporter.